The sequence spans 309 residues: Cysteinyl leukotriene receptor 2 (309 aa).

Residues 1–26 are Extracellular-facing; it reads MEVTGTPSSYSNRNCTIENFKKEFYP. The N-linked (GlcNAc...) asparagine glycan is linked to Asn-14. A helical membrane pass occupies residues 27-47; sequence IIYLIIFFWGALGNGFSIYVF. Over 48–56 the chain is Cytoplasmic; that stretch reads LQTCKKSTS. A helical transmembrane segment spans residues 57–77; it reads VNVFMLNLATSDFLFISTLPF. Residues 78 to 98 lie on the Extracellular side of the membrane; sequence RADYYFRGSNWIFGDLACRVM. The cysteines at positions 95 and 171 are disulfide-linked. Residues 99-119 traverse the membrane as a helical segment; sequence SYSLYVNMYTSIYFLTVLSVV. The Cytoplasmic segment spans residues 120–138; it reads RFLATVHPFRMFHVTSVRS. Residues 139–159 form a helical membrane-spanning segment; the sequence is AWILCGIIWVFIMASSALLLV. Residues 160–187 are Extracellular-facing; it reads NGQEEKDNIISCLELSPQKFKSLLIMNH. Residues 188–208 traverse the membrane as a helical segment; the sequence is IAVAVGFLLPFLTLTVCYLLI. At 209 to 229 the chain is on the cytoplasmic side; that stretch reads IRILLKAEIPESGPRAAHRKA. Residues 230–250 form a helical membrane-spanning segment; it reads LTTIVIAMITFLLCFLPYHAL. At 251–271 the chain is on the extracellular side; the sequence is RTLHLVTWDKDSCGDVLHKAT. Residues 272–292 form a helical membrane-spanning segment; it reads VITLTMAAANSCFNPFLYYFA. The Cytoplasmic segment spans residues 293-309; that stretch reads GENFKARLRAIFSKVHL.

The protein belongs to the G-protein coupled receptor 1 family. In terms of tissue distribution, widely expressed at low levels, with highest expression in the spleen, thymus and adrenal gland, and lower in the kidney, brain and peripheral blood leukocytes.

The protein resides in the cell membrane. In terms of biological role, receptor for cysteinyl leukotrienes. The response is mediated via a G-protein that activates a phosphatidylinositol-calcium second messenger system. The rank order of affinities for the leukotrienes is LTC4 = LTD4 &gt;&gt; LTE4. The polypeptide is Cysteinyl leukotriene receptor 2 (Cysltr2) (Mus musculus (Mouse)).